A 1357-amino-acid chain; its full sequence is Vascular endothelial growth factor receptor 3 (1357 aa).

A signal peptide spans 1–24; that stretch reads MKRDFTFFCRIWIGIPFFSGLVNG. 7 Ig-like C2-type domains span residues 25-121, 138-244, 255-343, 352-442, 453-583, 583-690, and 699-785; these read FSMS…YYRC, IFVF…VQVI, PEDS…RELT, PFIS…LNFT, EKEA…TTIP, PEGF…HRKY, and PRYR…ATVS. At 25–796 the chain is on the extracellular side; it reads FSMSPPTLDN…IGSDDKTNVE (772 aa). N-linked (GlcNAc...) asparagine glycosylation is found at Asn44, Asn48, Asn114, Asn216, and Asn271. Intrachain disulfides connect Cys51-Cys121 and Cys173-Cys225. Cys272 and Cys331 are disulfide-bonded. Residues Asn360, Asn400, and Asn440 are each glycosylated (N-linked (GlcNAc...) asparagine). 3 cysteine pairs are disulfide-bonded: Cys473-Cys562, Cys493-Cys514, and Cys606-Cys674. Asn553, Asn610, Asn660, Asn707, Asn711, and Asn751 each carry an N-linked (GlcNAc...) asparagine glycan. Cysteines 720 and 772 form a disulfide. The helical transmembrane segment at 797-817 threads the bilayer; the sequence is IVILIGTGVIAIFFWVLLLVI. At 818 to 1357 the chain is on the cytoplasmic side; that stretch reads FCNVKRVNPA…DYFSSSDQAV (540 aa). One can recognise a Protein kinase domain in the interval 866–1181; sequence LRLGKVLGHG…ALVEILGDLL (316 aa). ATP contacts are provided by residues 872 to 880 and Lys900; that span reads LGHGAFGKV. Positions 978–1007 are disordered; that stretch reads QSQVRRMIEAGQASQSEHQPSTSSTNPPRV. Residues 989–1005 are compositionally biased toward polar residues; it reads QASQSEHQPSTSSTNPP. Asp1045 functions as the Proton acceptor in the catalytic mechanism. 2 positions are modified to phosphotyrosine; by autocatalysis: Tyr1071 and Tyr1076. Positions 1192–1212 are disordered; that stretch reads NVSQSSEDDGFSQASSRPPSQ. Phosphotyrosine; by autocatalysis is present on residues Tyr1226, Tyr1227, Tyr1334, and Tyr1338.

The protein belongs to the protein kinase superfamily. Tyr protein kinase family. CSF-1/PDGF receptor subfamily. In terms of assembly, interacts with vegfc and vegfd. Monomer in the absence of bound vegfc or vegfd. Homodimer in the presence of bound vegfc or vegfd. In terms of processing, autophosphorylated on tyrosine residues upon ligand binding. Autophosphorylation occurs in trans, i.e. one subunit of the dimeric receptor phosphorylates tyrosine residues on the other subunit.

The protein localises to the cell membrane. The protein resides in the cytoplasm. Its subcellular location is the nucleus. The catalysed reaction is L-tyrosyl-[protein] + ATP = O-phospho-L-tyrosyl-[protein] + ADP + H(+). Present in an inactive conformation in the absence of bound ligand. Binding of vegfc or vegfd leads to dimerization and activation by autophosphorylation on tyrosine residues. In terms of biological role, tyrosine-protein kinase that acts as a cell-surface receptor for vegf or vegfc. Combinations of multiple VEGF receptors are required for development of different blood vessel types in the embryo. Involved in angiogenesis, specifically in VEGF-induced sprouting of new blood vessels, but not required for proper vasculogenesis or hematopoiesis. This chain is Vascular endothelial growth factor receptor 3 (flt4), found in Danio rerio (Zebrafish).